The primary structure comprises 258 residues: UPF0246 protein YaaA (258 aa).

This sequence belongs to the UPF0246 family.

In Escherichia coli O8 (strain IAI1), this protein is UPF0246 protein YaaA.